We begin with the raw amino-acid sequence, 249 residues long: 3-deoxy-D-manno-octulosonic acid kinase (249 aa).

D175 is a catalytic residue.

The protein belongs to the protein kinase superfamily. KdkA/RfaP family.

The protein resides in the cell inner membrane. The enzyme catalyses an alpha-Kdo-(2-&gt;6)-lipid IVA + ATP = a 4-O-phospho-alpha-Kdo-(2-&gt;6)-lipid IVA + ADP + H(+). The protein operates within bacterial outer membrane biogenesis; LPS core biosynthesis. Catalyzes the ATP-dependent phosphorylation of the 3-deoxy-D-manno-octulosonic acid (Kdo) residue in Kdo-lipid IV(A) at the 4-OH position. In Xylella fastidiosa (strain M12), this protein is 3-deoxy-D-manno-octulosonic acid kinase.